Here is a 123-residue protein sequence, read N- to C-terminus: Large ribosomal subunit protein bL12 (123 aa).

The protein belongs to the bacterial ribosomal protein bL12 family. As to quaternary structure, homodimer. Part of the ribosomal stalk of the 50S ribosomal subunit. Forms a multimeric L10(L12)X complex, where L10 forms an elongated spine to which 2 to 4 L12 dimers bind in a sequential fashion. Binds GTP-bound translation factors.

Forms part of the ribosomal stalk which helps the ribosome interact with GTP-bound translation factors. Is thus essential for accurate translation. In Chlorobium luteolum (strain DSM 273 / BCRC 81028 / 2530) (Pelodictyon luteolum), this protein is Large ribosomal subunit protein bL12.